Consider the following 357-residue polypeptide: U5 small nuclear ribonucleoprotein 40 kDa protein (357 aa).

Lys18 participates in a covalent cross-link: Glycyl lysine isopeptide (Lys-Gly) (interchain with G-Cter in SUMO2). The residue at position 21 (Arg21) is an Asymmetric dimethylarginine. 7 WD repeats span residues 64-103, 107-146, 149-189, 191-230, 233-272, 283-322, and 325-357; these read GHEG…DNYA, GHSG…RVKR, GHTS…AIQT, QNTY…LTYT, GHAD…PKER, NFEK…ILYK, and GHAG…GEIQ. Lys270 is covalently cross-linked (Glycyl lysine isopeptide (Lys-Gly) (interchain with G-Cter in SUMO2)).

As to quaternary structure, component of the pre-catalytic and catalytic spliceosome complexes. Component of the postcatalytic spliceosome P complex. Part of the U5 snRNP complex. Interacts with PRPF8. Component of the U4/U6-U5 tri-snRNP complex composed of the U4, U6 and U5 snRNAs and at least PRPF3, PRPF4, PRPF6, PRPF8, PRPF31, SNRNP200, TXNL4A, WDR57, SNRNP40, DDX23, CD2BP2, PPIH, SNU13, EFTUD2, SART1 and USP39. Component of the minor spliceosome, which splices U12-type introns.

Its subcellular location is the nucleus. In terms of biological role, required for pre-mRNA splicing as component of the activated spliceosome. Component of the U5 small nuclear ribonucleoprotein (snRNP) complex and the U4/U6-U5 tri-snRNP complex, building blocks of the spliceosome. As a component of the minor spliceosome, involved in the splicing of U12-type introns in pre-mRNAs. The polypeptide is U5 small nuclear ribonucleoprotein 40 kDa protein (SNRNP40) (Homo sapiens (Human)).